Consider the following 356-residue polypeptide: Protein RecA (356 aa).

68-75 (GPESSGKT) is an ATP binding site.

Belongs to the RecA family.

Its subcellular location is the cytoplasm. Functionally, can catalyze the hydrolysis of ATP in the presence of single-stranded DNA, the ATP-dependent uptake of single-stranded DNA by duplex DNA, and the ATP-dependent hybridization of homologous single-stranded DNAs. It interacts with LexA causing its activation and leading to its autocatalytic cleavage. In Clostridium botulinum (strain Eklund 17B / Type B), this protein is Protein RecA.